The chain runs to 288 residues: 33 kDa chaperonin (288 aa).

2 disulfide bridges follow: C236-C238 and C269-C272.

The protein belongs to the HSP33 family. Post-translationally, under oxidizing conditions two disulfide bonds are formed involving the reactive cysteines. Under reducing conditions zinc is bound to the reactive cysteines and the protein is inactive.

The protein resides in the cytoplasm. Its function is as follows. Redox regulated molecular chaperone. Protects both thermally unfolding and oxidatively damaged proteins from irreversible aggregation. Plays an important role in the bacterial defense system toward oxidative stress. In Syntrophotalea carbinolica (strain DSM 2380 / NBRC 103641 / GraBd1) (Pelobacter carbinolicus), this protein is 33 kDa chaperonin.